Reading from the N-terminus, the 65-residue chain is Putative beta-neurotoxin RjAa2 (65 aa).

The region spanning 1-64 (KEGYPMGRDG…VWDSSTNKCG (64 aa)) is the LCN-type CS-alpha/beta domain. 4 cysteine pairs are disulfide-bonded: Cys11–Cys63, Cys15–Cys37, Cys22–Cys44, and Cys26–Cys46.

It belongs to the long (4 C-C) scorpion toxin superfamily. Sodium channel inhibitor family. Beta subfamily. In terms of tissue distribution, expressed by the venom gland.

The protein resides in the secreted. Its function is as follows. Beta toxins bind voltage-independently at site-4 of sodium channels (Nav) and shift the voltage of activation toward more negative potentials thereby affecting sodium channel activation and promoting spontaneous and repetitive firing. The protein is Putative beta-neurotoxin RjAa2 of Rhopalurus junceus (Caribbean blue scorpion).